Reading from the N-terminus, the 255-residue chain is Phosphatidylglycerol--prolipoprotein diacylglyceryl transferase (255 aa).

3 consecutive transmembrane segments (helical) span residues tryptophan 15–cysteine 35, isoleucine 46–valine 66, and leucine 84–serine 104. Position 130 (arginine 130) interacts with a 1,2-diacyl-sn-glycero-3-phospho-(1'-sn-glycerol). 3 helical membrane passes run proline 169–phenylalanine 189, glycine 196–leucine 216, and valine 228–lysine 248.

This sequence belongs to the Lgt family.

It is found in the cell membrane. The enzyme catalyses L-cysteinyl-[prolipoprotein] + a 1,2-diacyl-sn-glycero-3-phospho-(1'-sn-glycerol) = an S-1,2-diacyl-sn-glyceryl-L-cysteinyl-[prolipoprotein] + sn-glycerol 1-phosphate + H(+). The protein operates within protein modification; lipoprotein biosynthesis (diacylglyceryl transfer). Catalyzes the transfer of the diacylglyceryl group from phosphatidylglycerol to the sulfhydryl group of the N-terminal cysteine of a prolipoprotein, the first step in the formation of mature lipoproteins. This chain is Phosphatidylglycerol--prolipoprotein diacylglyceryl transferase, found in Clostridium kluyveri (strain NBRC 12016).